The sequence spans 251 residues: Triosephosphate isomerase (251 aa).

10–12 (NWK) serves as a coordination point for substrate. His-98 acts as the Electrophile in catalysis. Glu-169 functions as the Proton acceptor in the catalytic mechanism. Substrate-binding positions include Gly-175, Ser-213, and 234 to 235 (GG).

It belongs to the triosephosphate isomerase family. Homodimer.

Its subcellular location is the cytoplasm. It catalyses the reaction D-glyceraldehyde 3-phosphate = dihydroxyacetone phosphate. It functions in the pathway carbohydrate biosynthesis; gluconeogenesis. Its pathway is carbohydrate degradation; glycolysis; D-glyceraldehyde 3-phosphate from glycerone phosphate: step 1/1. Functionally, involved in the gluconeogenesis. Catalyzes stereospecifically the conversion of dihydroxyacetone phosphate (DHAP) to D-glyceraldehyde-3-phosphate (G3P). The polypeptide is Triosephosphate isomerase (Paracidovorax citrulli (strain AAC00-1) (Acidovorax citrulli)).